The following is a 242-amino-acid chain: MRLGVVTLFPEMFRAVTDFGVTGRAVKNGLLELQTWNPRDFTHDKHKTVDDRPYGGGPGMLMMVQPLRDAIHAAKAATGDSAKVIYLSPQGRKLTQQGVEELVKSDSLILVCGRYEGIDERIIQTEVDEEWSIGDYVLSGGELPAMTLIDSVSRLVPGVLGKKASAEQDSFSDGLLDCPHYTRPETLDNLDVPAVLLSGNHEHIRRWRLQQSLGRTLLRRPDLLENLALTDEQTKLLNEFVE.

Residues Gly113 and 133 to 138 (IGDYVL) contribute to the S-adenosyl-L-methionine site.

This sequence belongs to the RNA methyltransferase TrmD family. As to quaternary structure, homodimer.

Its subcellular location is the cytoplasm. It carries out the reaction guanosine(37) in tRNA + S-adenosyl-L-methionine = N(1)-methylguanosine(37) in tRNA + S-adenosyl-L-homocysteine + H(+). Its function is as follows. Specifically methylates guanosine-37 in various tRNAs. The chain is tRNA (guanine-N(1)-)-methyltransferase from Shewanella sediminis (strain HAW-EB3).